Here is a 103-residue protein sequence, read N- to C-terminus: Small integral membrane protein 32 (103 aa).

Residues 55-75 (YLLLFFLLLLSVALVVLFIGC) traverse the membrane as a helical segment.

It localises to the membrane. This chain is Small integral membrane protein 32, found in Homo sapiens (Human).